We begin with the raw amino-acid sequence, 887 residues long: Cadherin-1 (887 aa).

The first 26 residues, methionine 1–glycine 26, serve as a signal peptide directing secretion. A propeptide spanning residues arginine 27–arginine 160 is cleaved from the precursor. 5 consecutive Cadherin domains span residues aspartate 161–phenylalanine 268, isoleucine 269–phenylalanine 381, asparagine 382–phenylalanine 493, valine 494–proline 599, and threonine 600–tyrosine 704. The Extracellular portion of the chain corresponds to aspartate 161–isoleucine 714. Aspartate 263 lines the Ca(2+) pocket. N-linked (GlcNAc...) asparagine glycosylation is present at asparagine 291. Position 294 (aspartate 294) interacts with Ca(2+). A glycan (N-linked (GlcNAc...) asparagine) is linked at asparagine 346. Asparagine 564 and asparagine 643 each carry an N-linked (GlcNAc...) asparagine glycan. A helical membrane pass occupies residues leucine 715 to alanine 735. The Cytoplasmic segment spans residues arginine 736–glutamate 887. Positions leucine 745–aspartate 770 are disordered. The span at tyrosine 759–aspartate 770 shows a compositional bias: acidic residues.

In terms of assembly, homodimer. Interacts with CTNNA2. In terms of tissue distribution, expressed in the liver.

It localises to the cell junction. It is found in the adherens junction. The protein localises to the cell membrane. Its subcellular location is the endosome. The protein resides in the golgi apparatus. It localises to the trans-Golgi network. It is found in the cytoplasm. The protein localises to the desmosome. Cadherins are calcium-dependent cell adhesion proteins. They preferentially interact with themselves in a homophilic manner in connecting cells; cadherins may thus contribute to the sorting of heterogeneous cell types. Promotes organization of radial actin fiber structure and cellular response to contractile forces, via anchoring of radial actin fibers to CDH1 junction complexes at the cell membrane. E-cadherin is a ligand for integrin alpha-E/beta-7. The chain is Cadherin-1 (CDH1) from Gallus gallus (Chicken).